A 748-amino-acid chain; its full sequence is Polyribonucleotide nucleotidyltransferase (748 aa).

Aspartate 522 and aspartate 528 together coordinate Mg(2+). The KH domain occupies 588-647 (PRVTTIRVPVDKIGEVIGPKGKIINAITEETGAQISIEDDGTVFVGATDGPSAQAAIDRI). In terms of domain architecture, S1 motif spans 659–728 (GERFLGTVVK…KRGKISLVLV (70 aa)).

The protein belongs to the polyribonucleotide nucleotidyltransferase family. Requires Mg(2+) as cofactor.

Its subcellular location is the cytoplasm. The enzyme catalyses RNA(n+1) + phosphate = RNA(n) + a ribonucleoside 5'-diphosphate. Its function is as follows. Involved in mRNA degradation. Catalyzes the phosphorolysis of single-stranded polyribonucleotides processively in the 3'- to 5'-direction. The chain is Polyribonucleotide nucleotidyltransferase from Mycobacterium avium (strain 104).